We begin with the raw amino-acid sequence, 266 residues long: Protein YdcF (266 aa).

This sequence to S.coelicolor SCO4629. Monomer.

Its function is as follows. Binds S-adenosyl-L-methionine (AdoMet). The chain is Protein YdcF (ydcF) from Escherichia coli (strain K12).